The following is a 104-amino-acid chain: Replication restart protein PriB (104 aa).

The SSB domain maps to 1 to 101 (MTNRLALSGT…LHAEQIELID (101 aa)).

The protein belongs to the PriB family. Homodimer. Interacts with PriA and DnaT. Component of the replication restart primosome. Primosome assembly occurs via a 'hand-off' mechanism. PriA binds to replication forks, subsequently PriB then DnaT bind; DnaT then displaces ssDNA to generate the helicase loading substrate.

Functionally, involved in the restart of stalled replication forks, which reloads the replicative helicase on sites other than the origin of replication; the PriA-PriB pathway is the major replication restart pathway. During primosome assembly it facilitates complex formation between PriA and DnaT on DNA; stabilizes PriA on DNA. Stimulates the DNA unwinding activity of PriA helicase. In Salmonella agona (strain SL483), this protein is Replication restart protein PriB.